The following is a 382-amino-acid chain: Mannitol-1-phosphate 5-dehydrogenase (382 aa).

NAD(+) is bound at residue Ala-3–Gly-14.

It belongs to the mannitol dehydrogenase family.

The enzyme catalyses D-mannitol 1-phosphate + NAD(+) = beta-D-fructose 6-phosphate + NADH + H(+). This chain is Mannitol-1-phosphate 5-dehydrogenase, found in Mannheimia succiniciproducens (strain KCTC 0769BP / MBEL55E).